We begin with the raw amino-acid sequence, 720 residues long: Polyribonucleotide nucleotidyltransferase (720 aa).

Residues aspartate 484 and aspartate 490 each contribute to the Mg(2+) site. Residues 551–610 (PRMYKINIDPSKIGSVIGSGGKTIRSIIEQTNTTVDIENDGTVVIGAIDEASAKKAIKII) enclose the KH domain. The S1 motif domain maps to 620 to 688 (GSIYTGKVTR…NQGRVNLSHR (69 aa)). Residues 697 to 720 (PISRNRDSQPRRPGPFRPSDRSNS) are disordered.

The protein belongs to the polyribonucleotide nucleotidyltransferase family. The cofactor is Mg(2+).

The protein localises to the cytoplasm. The catalysed reaction is RNA(n+1) + phosphate = RNA(n) + a ribonucleoside 5'-diphosphate. Functionally, involved in mRNA degradation. Catalyzes the phosphorolysis of single-stranded polyribonucleotides processively in the 3'- to 5'-direction. The chain is Polyribonucleotide nucleotidyltransferase from Dehalococcoides mccartyi (strain ATCC BAA-2100 / JCM 16839 / KCTC 5957 / BAV1).